Here is a 261-residue protein sequence, read N- to C-terminus: Cytochrome c oxidase subunit 3 (261 aa).

The Mitochondrial matrix portion of the chain corresponds to 1 to 15; that stretch reads MTHQTHAYHMVNPSP. A helical membrane pass occupies residues 16 to 34; the sequence is WPLTGALSALLMTSGLIMW. At 35 to 40 the chain is on the mitochondrial intermembrane side; the sequence is FHFNSV. A helical transmembrane segment spans residues 41-66; the sequence is ALLMLGLTTNMLTMYQWWRDVIREST. At 67–72 the chain is on the mitochondrial matrix side; the sequence is FQGHHT. A helical membrane pass occupies residues 73–105; it reads PNVQKGLRYGMILFIISEVLFFTGFFWAFYHSS. The Mitochondrial intermembrane portion of the chain corresponds to 106 to 128; that stretch reads LAPTPELGGCWPPTGIHPLNPLE. Residues 129 to 152 form a helical membrane-spanning segment; sequence VPLLNTSVLLASGVSITWAHHSLM. The Mitochondrial matrix segment spans residues 153–155; it reads EGN. The chain crosses the membrane as a helical span at residues 156–183; that stretch reads RNHMLQALFITIALGVYFTLLQASEYYE. Topologically, residues 184–190 are mitochondrial intermembrane; that stretch reads APFTISD. Residues 191–223 traverse the membrane as a helical segment; that stretch reads GVYGSTFFVATGFHGLHVIIGSTFLIVCFFRQL. Topologically, residues 224-232 are mitochondrial matrix; that stretch reads KFHFTSSHH. The helical transmembrane segment at 233 to 256 threads the bilayer; sequence FGFEAAAWYWHFVDVVWLFLYVSI. Over 257–261 the chain is Mitochondrial intermembrane; that stretch reads YWWGS.

Belongs to the cytochrome c oxidase subunit 3 family. As to quaternary structure, component of the cytochrome c oxidase (complex IV, CIV), a multisubunit enzyme composed of 14 subunits. The complex is composed of a catalytic core of 3 subunits MT-CO1, MT-CO2 and MT-CO3, encoded in the mitochondrial DNA, and 11 supernumerary subunits COX4I, COX5A, COX5B, COX6A, COX6B, COX6C, COX7A, COX7B, COX7C, COX8 and NDUFA4, which are encoded in the nuclear genome. The complex exists as a monomer or a dimer and forms supercomplexes (SCs) in the inner mitochondrial membrane with NADH-ubiquinone oxidoreductase (complex I, CI) and ubiquinol-cytochrome c oxidoreductase (cytochrome b-c1 complex, complex III, CIII), resulting in different assemblies (supercomplex SCI(1)III(2)IV(1) and megacomplex MCI(2)III(2)IV(2)).

The protein resides in the mitochondrion inner membrane. The enzyme catalyses 4 Fe(II)-[cytochrome c] + O2 + 8 H(+)(in) = 4 Fe(III)-[cytochrome c] + 2 H2O + 4 H(+)(out). Component of the cytochrome c oxidase, the last enzyme in the mitochondrial electron transport chain which drives oxidative phosphorylation. The respiratory chain contains 3 multisubunit complexes succinate dehydrogenase (complex II, CII), ubiquinol-cytochrome c oxidoreductase (cytochrome b-c1 complex, complex III, CIII) and cytochrome c oxidase (complex IV, CIV), that cooperate to transfer electrons derived from NADH and succinate to molecular oxygen, creating an electrochemical gradient over the inner membrane that drives transmembrane transport and the ATP synthase. Cytochrome c oxidase is the component of the respiratory chain that catalyzes the reduction of oxygen to water. Electrons originating from reduced cytochrome c in the intermembrane space (IMS) are transferred via the dinuclear copper A center (CU(A)) of subunit 2 and heme A of subunit 1 to the active site in subunit 1, a binuclear center (BNC) formed by heme A3 and copper B (CU(B)). The BNC reduces molecular oxygen to 2 water molecules using 4 electrons from cytochrome c in the IMS and 4 protons from the mitochondrial matrix. The sequence is that of Cytochrome c oxidase subunit 3 (MT-CO3) from Nanger granti (Grant's gazelle).